A 753-amino-acid chain; its full sequence is Subtilisin-like protease SBT3.17 (753 aa).

The N-terminal stretch at 1 to 29 is a signal peptide; that stretch reads MGNSFLIADTSSLVIGLLLILNGVFISAA. Residues 30–116 constitute a propeptide, activation peptide; the sequence is KHYGLNKIHI…VVPSRVMRLK (87 aa). Residues 38–115 enclose the Inhibitor I9 domain; sequence HIVHLGAKQH…RVVPSRVMRL (78 aa). Residue asparagine 97 is glycosylated (N-linked (GlcNAc...) asparagine). The 484-residue stretch at 120–603 folds into the Peptidase S8 domain; the sequence is TFDYLGLLPT…GGLINPEKVT (484 aa). Aspartate 150 functions as the Charge relay system in the catalytic mechanism. Asparagine 161 carries an N-linked (GlcNAc...) asparagine glycan. Histidine 227 functions as the Charge relay system in the catalytic mechanism. A glycan (N-linked (GlcNAc...) asparagine) is linked at asparagine 369. The active-site Charge relay system is serine 534. N-linked (GlcNAc...) asparagine glycans are attached at residues asparagine 639, asparagine 704, and asparagine 737.

It belongs to the peptidase S8 family.

The protein resides in the secreted. This chain is Subtilisin-like protease SBT3.17, found in Arabidopsis thaliana (Mouse-ear cress).